Here is a 361-residue protein sequence, read N- to C-terminus: dTDP-glucose 4,6-dehydratase (361 aa).

NAD(+) contacts are provided by residues 11–12, 32–35, 58–59, 80–84, and T99; these read FI, DKLT, DI, and LAAES. S84 serves as a coordination point for substrate. T133 is a substrate binding site. The Proton donor role is filled by D134. Active-site proton acceptor residues include E135 and Y167. Residue 167-171 participates in NAD(+) binding; it reads YSASK. N196 contributes to the substrate binding site. N197 contributes to the NAD(+) binding site. Substrate-binding positions include 206–207, 222–224, R231, N266, 296–300, and Y357; these read KL, PIY, and DRPGH.

This sequence belongs to the NAD(P)-dependent epimerase/dehydratase family. dTDP-glucose dehydratase subfamily. Homodimer. NAD(+) serves as cofactor.

The catalysed reaction is dTDP-alpha-D-glucose = dTDP-4-dehydro-6-deoxy-alpha-D-glucose + H2O. Its pathway is carbohydrate biosynthesis; dTDP-L-rhamnose biosynthesis. It functions in the pathway bacterial outer membrane biogenesis; LPS O-antigen biosynthesis. Its function is as follows. Catalyzes the dehydration of dTDP-D-glucose to form dTDP-6-deoxy-D-xylo-4-hexulose via a three-step process involving oxidation, dehydration and reduction. In Salmonella typhimurium (strain LT2 / SGSC1412 / ATCC 700720), this protein is dTDP-glucose 4,6-dehydratase.